Reading from the N-terminus, the 1222-residue chain is Probable disease resistance protein At5g45510 (1222 aa).

49 to 56 (GEAGIGKT) serves as a coordination point for ATP. Positions 122–183 (GERDEDEEEE…KLEAEKKLVD (62 aa)) form a coiled coil. Composition is skewed to basic and acidic residues over residues 171 to 205 (AAEK…KEKT), 212 to 224 (GEDK…ERKP), 263 to 279 (RRQE…HAEG), and 286 to 322 (SGEK…HEKV). 2 disordered regions span residues 171–225 (AAEK…RKPY) and 263–327 (RRQE…PPTI). Residue Thr-293 is modified to Phosphothreonine. 11 LRR repeats span residues 654 to 676 (LLRV…KALT), 677 to 699 (KLNT…FFES), 702 to 724 (ELRS…SGLK), 725 to 747 (ELHC…QELV), 785 to 806 (KLQH…QDSA), 813 to 835 (SLTR…KPLS), 836 to 856 (GLQI…EVCF), 861 to 883 (ELKT…EDLS), 884 to 906 (SLNE…EKLE), 907 to 929 (NLEV…FEKM), and 931 to 951 (YLRV…PADT).

This sequence belongs to the disease resistance NB-LRR family.

In terms of biological role, probable disease resistance protein. The protein is Probable disease resistance protein At5g45510 of Arabidopsis thaliana (Mouse-ear cress).